We begin with the raw amino-acid sequence, 1705 residues long: Homeobox-DDT domain protein RLT1 (1705 aa).

Disordered stretches follow at residues 1–53 (MEMG…QLET), 118–167 (ELPA…EYET), 237–267 (HDPRPRRSHAAARSFHEQQSLDDPSSFTPNM), 296–322 (GPVPRSYVTPGHASRNCSTSQQDMPSP), and 352–414 (GVRK…RKEE). The homeobox DNA-binding region spans 39–98 (VKPKRQMKTPFQLETLEKVYSEEKYPSEATRAELSEKLDLSDRQLQMWFCHRRLKDKKDG). The span at 136–159 (GSESGCSPYSNSRRNFASGSSSSR) shows a compositional bias: low complexity. 2 stretches are compositionally biased toward polar residues: residues 253-265 (EQQSLDDPSSFTP) and 310-319 (RNCSTSQQDM). Residues 549 to 608 (DETVGNLLMVWRFLISFSDVLDLWPFTLDEFIQAFHDYDSRLLGEIHVTLLRSIIRDVED) enclose the DDT domain. In terms of domain architecture, HTH HARE-type spans 731-800 (GTVKFAAFHV…APSTYCVRAP (70 aa)). 5 disordered regions span residues 1028-1053 (TRERDSFDRDPSQLLDETKPLEDLSN), 1198-1229 (VNHSPTDSVSPSSSAISGSNSDSMETSTSIRV), 1441-1502 (PEDE…KAQS), 1561-1635 (PKSE…FVDY), and 1652-1705 (AIEE…SSDS). Residues 1201-1220 (SPTDSVSPSSSAISGSNSDS) show a composition bias toward low complexity. Over residues 1455–1465 (SPFKGKGPREQ) the composition is skewed to basic and acidic residues. 3 stretches are compositionally biased toward acidic residues: residues 1565-1574 (EVEEDEEEEE), 1611-1628 (VDDESDNSVGVESEDEDG), and 1669-1684 (GEDDAEMSESSEDDDV).

In terms of assembly, interacts with CHR11 and CHR17. Interacts (via the DDT domain) with CHR11 (via C-terminus). As to expression, highly expressed in growing tissues such as inflorescence and flower meristems, young leaves and floral organs. Expressed in roots, rosette and cauline leaves, stems, flowers, inflorescences and siliques.

Its subcellular location is the nucleus. In terms of biological role, transcriptional regulator required for the maintenance of the plant vegetative phase. In association with CHR11 or CHR17 may prevent the early activation of the vegetative-to-reproductive transition by regulating key genes that contribute to flower timing, such as FT, SEP1, SEP3, AGL8/FUL, SOC1 and FLC. The sequence is that of Homeobox-DDT domain protein RLT1 from Arabidopsis thaliana (Mouse-ear cress).